The chain runs to 134 residues: Galectin-1 (134 aa).

Residue Ala-1 is modified to N-acetylalanine. Residues 4-134 form the Galectin domain; the sequence is GVAVTNLNLK…GLAFKSITTE (131 aa). A beta-D-galactoside contacts are provided by residues 45 to 49, His-53, Asn-62, and 69 to 72; these read HFNAR and WGSE.

Homodimer.

It localises to the secreted. It is found in the extracellular space. The protein resides in the extracellular matrix. May regulate cell apoptosis and cell differentiation. Binds beta-galactoside and a wide array of complex carbohydrates. The chain is Galectin-1 from Rhinella arenarum (Argentine common toad).